A 361-amino-acid chain; its full sequence is Mitochondrial import receptor subunit TOM40 homolog (361 aa).

Residues 1 to 10 (MGNVLAASSP) show a composition bias toward low complexity. Positions 1 to 71 (MGNVLAASSP…TASASGAAED (71 aa)) are disordered. The segment covering 11 to 36 (PAGPPPPPAPALVGLPPPPPSPPGFT) has biased composition (pro residues). 2 stretches are compositionally biased toward low complexity: residues 37 to 52 (LPPL…STSR) and 59 to 71 (GAAT…AAED).

This sequence belongs to the Tom40 family. As to quaternary structure, forms part of the preprotein translocase complex of the outer mitochondrial membrane (TOM complex) which consists of at least 7 different proteins (TOMM5, TOMM6, TOMM7, TOMM20, TOMM22, TOMM40 and TOMM70). Interacts with mitochondrial targeting sequences. Interacts with TIMM29; linking the TIM22 complex to the TOM complex. Forms a complex with BCAP31 (via C-terminus) which mediates the translocation of components of the mitochondrial membrane respiratory chain NADH dehydrogenase (Complex I) from the cytosol to the mitochondria. Interacts (via N-terminus) with CYP1A1 (via mitochondrial targeting signal); this interaction is required for CYP1A1 translocation across the mitochondrial outer membrane.

It is found in the mitochondrion outer membrane. Functionally, channel-forming protein essential for import of protein precursors into mitochondria. Plays a role in the assembly of the mitochondrial membrane respiratory chain NADH dehydrogenase (Complex I) by forming a complex with BCAP31 and mediating the translocation of Complex I components from the cytosol to the mitochondria. This is Mitochondrial import receptor subunit TOM40 homolog (TOMM40) from Homo sapiens (Human).